The sequence spans 143 residues: Large ribosomal subunit protein uL11 (143 aa).

Belongs to the universal ribosomal protein uL11 family. Part of the ribosomal stalk of the 50S ribosomal subunit. Interacts with L10 and the large rRNA to form the base of the stalk. L10 forms an elongated spine to which L12 dimers bind in a sequential fashion forming a multimeric L10(L12)X complex. One or more lysine residues are methylated.

In terms of biological role, forms part of the ribosomal stalk which helps the ribosome interact with GTP-bound translation factors. This is Large ribosomal subunit protein uL11 from Chromobacterium violaceum (strain ATCC 12472 / DSM 30191 / JCM 1249 / CCUG 213 / NBRC 12614 / NCIMB 9131 / NCTC 9757 / MK).